Reading from the N-terminus, the 65-residue chain is DNA gyrase inhibitor YacG (65 aa).

Residues Cys9, Cys12, Cys28, and Cys32 each coordinate Zn(2+). Positions Glu43–Gln65 are disordered.

Belongs to the DNA gyrase inhibitor YacG family. In terms of assembly, interacts with GyrB. Zn(2+) is required as a cofactor.

Inhibits all the catalytic activities of DNA gyrase by preventing its interaction with DNA. Acts by binding directly to the C-terminal domain of GyrB, which probably disrupts DNA binding by the gyrase. The polypeptide is DNA gyrase inhibitor YacG (Photorhabdus laumondii subsp. laumondii (strain DSM 15139 / CIP 105565 / TT01) (Photorhabdus luminescens subsp. laumondii)).